We begin with the raw amino-acid sequence, 657 residues long: Glycogen debranching enzyme (657 aa).

Residue Asp-336 is the Nucleophile of the active site. Glu-371 serves as the catalytic Proton donor. A disordered region spans residues 460–479; sequence ANGEENRDGTNNNYSNNHGK.

The protein belongs to the glycosyl hydrolase 13 family.

The enzyme catalyses Hydrolysis of (1-&gt;6)-alpha-D-glucosidic linkages to branches with degrees of polymerization of three or four glucose residues in limit dextrin.. Its pathway is glycan degradation; glycogen degradation. Its function is as follows. Removes maltotriose and maltotetraose chains that are attached by 1,6-alpha-linkage to the limit dextrin main chain, generating a debranched limit dextrin. The protein is Glycogen debranching enzyme of Shigella flexneri serotype 5b (strain 8401).